Reading from the N-terminus, the 1026-residue chain is MGSVLYSLSESANLYPASELFLRHRLQIVEELWESVLRQECGQNMVDLLRQLRDLCSPEGQATKDQAVSAVKLIEQLNINEAIRAARAFALYFQLINIIEQEYEQRQQLTRYSDLEAETAPLNGSENITSSSNHNEDDVIFNRGLGTDFLGKNWTNRGQGKQKGTFAALFPLLSKLNVPPQQIQRLISQLDVRLVFTAHPTEIVRHTIRDKQRQVVDLLQQLDEVENRAKDGGGYPWEAGEIREKLLEEIRLWWRTDELHQFKPTVLDEVDYALHYFQEVLFDGIPQLYKRFKYALNQTFSWLEPPSKDFCSFGSWVGSDRDGNPSVTPEITWQTACYQRKMVLERYIKSVTQLIELLSISMHWSDVLPDLLESLELDQSQLSEVYDALALRYRQEPYRLKLAYVLKRLENTRDRNLALYKGETPTNEDSPMYRSGSEFLAELRLIQHNLTETGLSCRELDNLICQVEIFDFNLTKLDIRQESTRHSDALNEILDYLQLLPQPYNDLSEEQRVAWLTTELQTRRPLISSELPFSDKTNDVIKTFRVVRSLQQEFGINICQTYIISMCRQVSDVLEVLLLAKEARLFDPAIAVGTIQVVPLFETVEDLQRSRSVMRQLFELPLYRALLAGGYKNTEVKVPNTELTPQSPAPSPQSVLTPDLQEVMLGYSDSNKDSGFLSSNWEIHKAQKSLQQIAEEYGVNLRIFHGRGGSVGRGGGPAHEAILAQPGHSINGRIKITEQGEVLASKYSLLDLALYNLETITTAVIQASLLRTGFDDIEPWNEIMEELAARSRQHYRGLIYEQPDFIDFFHQVTPIEEISQLQISSRPARRPSGKKDLSSLRAIPWVFSWTQTRFLLPSWYGVGTALQEFFNEEPEEHLKLMRYFYVKWPFFKMVISKVEMTLAKVDMQMAGHYVQELSDPEDKPRFEKVFEQIANEYYLTRDLVLKITDHGRLLDGDPVLQRSVQLRNGTIVPLGFIQVSLLKRLRQSKNNTATSGVIHSRYSKGELLRGALLTINGIAAGMRNTG.

Active-site residues include His-199 and Lys-672.

It belongs to the PEPCase type 1 family. It depends on Mg(2+) as a cofactor.

It carries out the reaction oxaloacetate + phosphate = phosphoenolpyruvate + hydrogencarbonate. In terms of biological role, forms oxaloacetate, a four-carbon dicarboxylic acid source for the tricarboxylic acid cycle. The chain is Phosphoenolpyruvate carboxylase (ppc) from Nostoc sp. (strain PCC 7120 / SAG 25.82 / UTEX 2576).